The sequence spans 264 residues: MAERRTRSGGAAQRSGPRTSLTKPSKSSKRKSGSDLPNSFSEIWPRTTPAVPVRKAIVLKKIVAHAVEVPDVHTVRRSPRISFILEKENNPPLKVPTKEDLFKTCSVPGTPSSTPVLYTQNVEPDSGEAELDSRDLEMSQKVRRSYSRLQSLGCASTSTPGRRSFFGFEGPDDLPGVSPVVCSKLIETPKVPAKDLVPARTKDLVPDSTKDLVPARTLPGISPPVVKEKRKKKVPEILKSELDKWAVAMNAEFEAAEQFELLIE.

The tract at residues 1–45 (MAERRTRSGGAAQRSGPRTSLTKPSKSSKRKSGSDLPNSFSEIWP) is disordered. 5 positions are modified to phosphoserine: Ser20, Ser32, Ser34, Ser78, and Ser82. The short motif at 87-89 (KEN) is the KEN box element. The residue at position 97 (Thr97) is a Phosphothreonine. Ser106 is modified (phosphoserine). 3 positions are modified to phosphothreonine: Thr110, Thr114, and Thr159. The short motif at 166–168 (FGF) is the FGF motif element. Ser222 is modified (phosphoserine). Residues 242-264 (LDKWAVAMNAEFEAAEQFELLIE) are C-terminal Sororin domain.

The protein belongs to the sororin family. As to quaternary structure, interacts with the APC/C complex. Interacts with the chromatin-bound cohesin complex; the interaction is indirect, occurs after DNA replication and requires acetylation of the cohesin component SMC3. Interacts (via the FGF motif) with PDS5A and PDS5B; the interaction is direct and prevents the interaction of PDS5A with WAPL. Phosphorylated. Phosphorylation, as cells enter mitosis, disrupts the interaction with PDS5A and relieves the inhibition of WAPL by CDCA5. In terms of processing, ubiquitinated by the APC/C complex in G1, leading to its degradation.

The protein resides in the nucleus. It is found in the chromosome. It localises to the cytoplasm. Regulator of sister chromatid cohesion in mitosis stabilizing cohesin complex association with chromatin. May antagonize the action of WAPL which stimulates cohesin dissociation from chromatin. Cohesion ensures that chromosome partitioning is accurate in both meiotic and mitotic cells and plays an important role in DNA repair. Required for efficient DNA double-stranded break repair. This Mus musculus (Mouse) protein is Sororin (Cdca5).